Consider the following 121-residue polypeptide: Small ribosomal subunit protein uS12 (121 aa).

Residues 1–25 (MPTINQLVRKNRKQKKSQSKSPVLE) are disordered. A compositionally biased stretch (basic residues) spans 9-18 (RKNRKQKKSQ). Residue aspartate 89 is modified to 3-methylthioaspartic acid.

Belongs to the universal ribosomal protein uS12 family. As to quaternary structure, part of the 30S ribosomal subunit. Contacts proteins S8 and S17. May interact with IF1 in the 30S initiation complex.

Its function is as follows. With S4 and S5 plays an important role in translational accuracy. Interacts with and stabilizes bases of the 16S rRNA that are involved in tRNA selection in the A site and with the mRNA backbone. Located at the interface of the 30S and 50S subunits, it traverses the body of the 30S subunit contacting proteins on the other side and probably holding the rRNA structure together. The combined cluster of proteins S8, S12 and S17 appears to hold together the shoulder and platform of the 30S subunit. This Rhodopirellula baltica (strain DSM 10527 / NCIMB 13988 / SH1) protein is Small ribosomal subunit protein uS12.